Here is a 562-residue protein sequence, read N- to C-terminus: MRSDMIKKGDHQAPARSLLHATGALKSPTDMNKPFVAICNSYIDIVPGHVHLRELADIAKEAIREAGAIPFEFNTIGVDDGIAMGHIGMRYSLPSREIIADAAETVINAHWFDGVFYIPNCDKITPGMILAAMRTNVPAIFCSGGPMKAGLSAHGKALTLSSMFEAVGAFKEGSISKEEFLDMEQNACPTCGSCAGMFTANSMNCLMEVLGLALPYNGTALAVSDQRREMIRQAAFKLVENIKNDLKPRDIVTREAIDDAFALDMAMGGSTNTVLHTLAIANEAGIDYDLERINAIAKRTPYLSKIAPSSSYSMHDVHEAGGVPAIINELMKKDGTLHPDRITVTGKTLRENNEGKEIKNFDVIHPLDAPYDAQGGLSILFGNIAPKGAVIKVGGVDPSIKTFTRKAICFNSHDEAVEAIDNRTVRAGHVVVIRYEGPKGGPGMPEMLAPTSSIVGRGLGKDVALITDGRFSGATRGIAVGHISPEAASGGPIALIEDGDEITIDLTNRTLNVNQPEDVLARRRESLTPFKAKVKTGYLARYTALVTSANTGGVMQVPENLI.

Asp80 lines the Mg(2+) pocket. Position 121 (Cys121) interacts with [2Fe-2S] cluster. Mg(2+) is bound by residues Asp122 and Lys123. Lys123 is modified (N6-carboxylysine). Position 194 (Cys194) interacts with [2Fe-2S] cluster. Glu446 lines the Mg(2+) pocket. Ser472 functions as the Proton acceptor in the catalytic mechanism.

Belongs to the IlvD/Edd family. Homodimer. It depends on [2Fe-2S] cluster as a cofactor. Requires Mg(2+) as cofactor.

The catalysed reaction is (2R)-2,3-dihydroxy-3-methylbutanoate = 3-methyl-2-oxobutanoate + H2O. It carries out the reaction (2R,3R)-2,3-dihydroxy-3-methylpentanoate = (S)-3-methyl-2-oxopentanoate + H2O. The protein operates within amino-acid biosynthesis; L-isoleucine biosynthesis; L-isoleucine from 2-oxobutanoate: step 3/4. Its pathway is amino-acid biosynthesis; L-valine biosynthesis; L-valine from pyruvate: step 3/4. In terms of biological role, functions in the biosynthesis of branched-chain amino acids. Catalyzes the dehydration of (2R,3R)-2,3-dihydroxy-3-methylpentanoate (2,3-dihydroxy-3-methylvalerate) into 2-oxo-3-methylpentanoate (2-oxo-3-methylvalerate) and of (2R)-2,3-dihydroxy-3-methylbutanoate (2,3-dihydroxyisovalerate) into 2-oxo-3-methylbutanoate (2-oxoisovalerate), the penultimate precursor to L-isoleucine and L-valine, respectively. This is Dihydroxy-acid dehydratase from Staphylococcus aureus (strain COL).